The following is a 268-amino-acid chain: Undecaprenyl-diphosphatase (268 aa).

The next 7 helical transmembrane spans lie at 47-67 (FAIL…FFKL), 83-103 (FIIG…IAGK), 109-129 (LFDP…LLWV), 144-164 (YPLL…IPGV), 184-204 (AAEF…VYDF), 218-238 (LVAI…KAFL), and 246-266 (FVLF…ALAL).

This sequence belongs to the UppP family.

It localises to the cell inner membrane. It carries out the reaction di-trans,octa-cis-undecaprenyl diphosphate + H2O = di-trans,octa-cis-undecaprenyl phosphate + phosphate + H(+). Its function is as follows. Catalyzes the dephosphorylation of undecaprenyl diphosphate (UPP). Confers resistance to bacitracin. In Bradyrhizobium sp. (strain BTAi1 / ATCC BAA-1182), this protein is Undecaprenyl-diphosphatase.